Reading from the N-terminus, the 457-residue chain is Endo-1,3(4)-beta-glucanase ARB_04519 (457 aa).

Positions 1–18 (MRTTGLLLLGALAELGSA) are cleaved as a signal peptide. The 301-residue stretch at 19 to 319 (TYILEDDYQP…YMKVYQQGTA (301 aa)) folds into the GH16 domain. Glutamate 130 acts as the Nucleophile in catalysis. Residue glutamate 135 is the Proton donor of the active site. Asparagine 200 carries N-linked (GlcNAc...) asparagine glycosylation. Residues 318 to 397 (TAPTKPSQAP…DSCPPPTQPA (80 aa)) are disordered. A compositionally biased stretch (low complexity) spans 333–352 (TPALPTMKSTSTVSSMVSAT). The span at 353-362 (QPAPTASNPT) shows a compositional bias: polar residues. Low complexity predominate over residues 368–378 (PSSSSSNNGPQ).

Belongs to the glycosyl hydrolase 16 family.

Its subcellular location is the secreted. It catalyses the reaction Endohydrolysis of (1-&gt;3)- or (1-&gt;4)-linkages in beta-D-glucans when the glucose residue whose reducing group is involved in the linkage to be hydrolyzed is itself substituted at C-3.. In terms of biological role, mixed-linked glucanase involved in the degradation of complex natural cellulosic substrates. Active on laminarin. lichenan, soluble carboxymethyl cellulose but not on pustulan. The chain is Endo-1,3(4)-beta-glucanase ARB_04519 from Arthroderma benhamiae (strain ATCC MYA-4681 / CBS 112371) (Trichophyton mentagrophytes).